A 191-amino-acid chain; its full sequence is Probable chemoreceptor glutamine deamidase CheD (191 aa).

The protein belongs to the CheD family.

The enzyme catalyses L-glutaminyl-[protein] + H2O = L-glutamyl-[protein] + NH4(+). Its function is as follows. Probably deamidates glutamine residues to glutamate on methyl-accepting chemotaxis receptors (MCPs), playing an important role in chemotaxis. This Hydrogenovibrio crunogenus (strain DSM 25203 / XCL-2) (Thiomicrospira crunogena) protein is Probable chemoreceptor glutamine deamidase CheD.